The chain runs to 365 residues: Cyclin-D5-2 (365 aa).

Belongs to the cyclin family. Cyclin D subfamily.

The chain is Cyclin-D5-2 (CYCD5-2) from Oryza sativa subsp. japonica (Rice).